The chain runs to 200 residues: ATP synthase subunit delta', mitochondrial (200 aa).

The transit peptide at 1–21 (MFRHSSRLLARATTMGWRRPF) directs the protein to the mitochondrion.

This sequence belongs to the ATPase epsilon chain family. As to quaternary structure, F-type ATPases have 2 components, CF(1) - the catalytic core - and CF(0) - the membrane proton channel. CF(1) has five subunits: alpha(3), beta(3), gamma(1), delta(1), epsilon(1). CF(0) has three main subunits: a, b and c.

It localises to the mitochondrion. The protein localises to the mitochondrion inner membrane. Functionally, mitochondrial membrane ATP synthase (F(1)F(0) ATP synthase or Complex V) produces ATP from ADP in the presence of a proton gradient across the membrane which is generated by electron transport complexes of the respiratory chain. F-type ATPases consist of two structural domains, F(1) - containing the extramembraneous catalytic core, and F(0) - containing the membrane proton channel, linked together by a central stalk and a peripheral stalk. During catalysis, ATP turnover in the catalytic domain of F(1) is coupled via a rotary mechanism of the central stalk subunits to proton translocation. Part of the complex F(1) domain and of the central stalk which is part of the complex rotary element. Rotation of the central stalk against the surrounding alpha(3)beta(3) subunits leads to hydrolysis of ATP in three separate catalytic sites on the beta subunits. The chain is ATP synthase subunit delta', mitochondrial from Ipomoea batatas (Sweet potato).